Reading from the N-terminus, the 210-residue chain is Glutathione S-transferase P 2 (210 aa).

Positions 2-81 constitute a GST N-terminal domain; it reads PPYTIVYFPS…HLGRSLGLYG (80 aa). Residues Tyr-8, Arg-14, Trp-39, Lys-45, 52 to 53, and 65 to 66 each bind glutathione; these read QL and QS. Residues 83–204 enclose the GST C-terminal domain; the sequence is NQREAAQVDM…SSPEHVNRPI (122 aa).

The protein belongs to the GST superfamily. Pi family. As to quaternary structure, homodimer. In terms of tissue distribution, selectively expressed in gall bladder, colon, heart, and skeletal muscle.

The enzyme catalyses RX + glutathione = an S-substituted glutathione + a halide anion + H(+). In terms of biological role, conjugation of reduced glutathione to a wide number of exogenous and endogenous hydrophobic electrophiles. Cannot metabolize 1-chloro-2,4-dinitrobenzene. The protein is Glutathione S-transferase P 2 (Gstp2) of Mus musculus (Mouse).